A 261-amino-acid chain; its full sequence is Early 39 kDa protein (261 aa).

Positions 215-261 (SYVPTPVSNKKRRAPPSAPKKIAKQRRDTKPPPTYVSDNTQDTNMSE) are disordered. A compositionally biased stretch (polar residues) spans 250-261 (VSDNTQDTNMSE).

This Orgyia pseudotsugata multicapsid polyhedrosis virus (OpMNPV) protein is Early 39 kDa protein.